Consider the following 345-residue polypeptide: Phosphoribosylformylglycinamidine cyclo-ligase (345 aa).

Belongs to the AIR synthase family.

It is found in the cytoplasm. The enzyme catalyses 2-formamido-N(1)-(5-O-phospho-beta-D-ribosyl)acetamidine + ATP = 5-amino-1-(5-phospho-beta-D-ribosyl)imidazole + ADP + phosphate + H(+). The protein operates within purine metabolism; IMP biosynthesis via de novo pathway; 5-amino-1-(5-phospho-D-ribosyl)imidazole from N(2)-formyl-N(1)-(5-phospho-D-ribosyl)glycinamide: step 2/2. This chain is Phosphoribosylformylglycinamidine cyclo-ligase, found in Anaeromyxobacter dehalogenans (strain 2CP-C).